The following is a 527-amino-acid chain: EGF domain-specific O-linked N-acetylglucosamine transferase (527 aa).

Positions 1–17 (MLKLLVLGVLLHDVSLS) are cleaved as a signal peptide. Residues 295-297 (DYD) carry the Required for optimal activity motif. Asn-354 carries N-linked (GlcNAc...) asparagine glycosylation. A Prevents secretion from ER motif is present at residues 524 to 527 (RDEL).

This sequence belongs to the glycosyltransferase 61 family.

The protein localises to the endoplasmic reticulum lumen. It carries out the reaction L-seryl-[protein] + UDP-N-acetyl-alpha-D-glucosamine = 3-O-(N-acetyl-beta-D-glucosaminyl)-L-seryl-[protein] + UDP + H(+). The catalysed reaction is L-threonyl-[protein] + UDP-N-acetyl-alpha-D-glucosamine = 3-O-(N-acetyl-beta-D-glucosaminyl)-L-threonyl-[protein] + UDP + H(+). In terms of biological role, catalyzes the transfer of a single N-acetylglucosamine from UDP-GlcNAc to a serine or threonine residue in extracellular proteins resulting in their modification with a beta-linked N-acetylglucosamine (O-GlcNAc). Specifically glycosylates the Thr residue located between the fifth and sixth conserved cysteines of folded EGF-like domains. The sequence is that of EGF domain-specific O-linked N-acetylglucosamine transferase (EOGT) from Canis lupus familiaris (Dog).